Consider the following 398-residue polypeptide: MSKTIAINAGSSSLKWQLYQMPEEAVLAQGIIERIGLKDSISTVKYDGKKEEQILDIHDHTEAVKILLNDLIHFGIIAAYDEITGVGHRVVAGGELFKESVVVNDKVLEQIEELSVLAPLHNPGAAAGIRAFRDILPDITSVCVFDTSFHTSMAKHTYLYPIPQKYYTDYKVRKYGAHGTSHKYVAQEAAKMLGRPLEELKLITAHIGNGVSITANYHGQSADTSMGFTPLAGPMMGTRSGDIDPAIIPYLIEQDPELKDAADVVNMLNKKSGLSGVSGISSDMRDIEAGLQEDNPDAVLAYNIFIDRIKKCIGQYFAVLNGADALVFTAGMGENAPLMRQDVIGGLTWFGMDIDPEKNVFGYRGDISTPESKVKVLVISTDEELCIARDVERLKNTK.

Position 8 (Asn-8) interacts with Mg(2+). Lys-15 contacts ATP. Arg-89 lines the substrate pocket. Asp-146 serves as the catalytic Proton donor/acceptor. ATP contacts are provided by residues 206-210, 283-285, and 331-335; these read HIGNG, DMR, and GMGEN. Position 383 (Glu-383) interacts with Mg(2+).

It belongs to the acetokinase family. In terms of assembly, homodimer. Requires Mg(2+) as cofactor. Mn(2+) serves as cofactor.

Its subcellular location is the cytoplasm. The catalysed reaction is acetate + ATP = acetyl phosphate + ADP. It participates in metabolic intermediate biosynthesis; acetyl-CoA biosynthesis; acetyl-CoA from acetate: step 1/2. Its function is as follows. Catalyzes the formation of acetyl phosphate from acetate and ATP. Can also catalyze the reverse reaction. In Streptococcus pyogenes serotype M4 (strain MGAS10750), this protein is Acetate kinase.